The chain runs to 45 residues: Large ribosomal subunit protein bL34 (45 aa).

This sequence belongs to the bacterial ribosomal protein bL34 family.

The chain is Large ribosomal subunit protein bL34 (rpmH) from Streptomyces coelicolor (strain ATCC BAA-471 / A3(2) / M145).